We begin with the raw amino-acid sequence, 231 residues long: Large ribosomal subunit protein uL1 (231 aa).

Belongs to the universal ribosomal protein uL1 family. Part of the 50S ribosomal subunit.

Binds directly to 23S rRNA. The L1 stalk is quite mobile in the ribosome, and is involved in E site tRNA release. Its function is as follows. Protein L1 is also a translational repressor protein, it controls the translation of the L11 operon by binding to its mRNA. This is Large ribosomal subunit protein uL1 from Paracidovorax citrulli (strain AAC00-1) (Acidovorax citrulli).